We begin with the raw amino-acid sequence, 400 residues long: Putative F-box protein At5g41510 (400 aa).

In terms of domain architecture, F-box spans 2 to 47 (ATMISNLPRDLIEEIFSRVPLTSMKAVRLTCKSWNNLSKSESFTKV).

This chain is Putative F-box protein At5g41510, found in Arabidopsis thaliana (Mouse-ear cress).